A 373-amino-acid polypeptide reads, in one-letter code: P2Y purinoceptor 1 (373 aa).

At 1–51 (MTEVPWSAVPNGTDAAFLAGLGSLWGNSTIASTAAVSSSFRCALIKTGFQF) the chain is on the extracellular side. 2 N-linked (GlcNAc...) asparagine glycosylation sites follow: N11 and N27. Cystine bridges form between C42/C296 and C124/C202. K46 is a binding site for ADP. The chain crosses the membrane as a helical span at residues 52 to 74 (YYLPAVYILVFIIGFLGNSVAIW). The Cytoplasmic portion of the chain corresponds to 75-87 (MFVFHMKPWSGIS). Residues 88-109 (VYMFNLALADFLYVLTLPALIF) form a helical membrane-spanning segment. The Extracellular segment spans residues 110–125 (YYFNKTDWIFGDVMCK). The N-linked (GlcNAc...) asparagine glycan is linked to N113. The chain crosses the membrane as a helical span at residues 126-147 (LQRFIFHVNLYGSILFLTCISA). Residues 148-166 (HRYSGVVYPLKSLGRLKKK) lie on the Cytoplasmic side of the membrane. Residues 167-188 (NAIYVSVLVWLIVVVAISPILF) traverse the membrane as a helical segment. The Extracellular segment spans residues 189–214 (YSGTGIRKNKTVTCYDSTSDEYLRSY). An N-linked (GlcNAc...) asparagine glycan is attached at N197. Residue 203-205 (YDS) coordinates ADP. The helical transmembrane segment at 215–237 (FIYSMCTTVAMFCIPLVLILGCY) threads the bilayer. At 238–260 (GLIVRALIYKDLDNSPLRRKSIY) the chain is on the cytoplasmic side. The helical transmembrane segment at 261–284 (LVIIVLTVFAVSYIPFHVMKTMNL) threads the bilayer. ADP contacts are provided by residues 283 to 287 (NLRAR), 303 to 306 (YATY), and R310. The Extracellular segment spans residues 285 to 303 (RARLDFQTPEMCDFNDRVY). Residues 304–325 (ATYQVTRGLASLNSCVDPILYF) traverse the membrane as a helical segment. Over 326 to 373 (LAGDTFRRRLSRATRKASRRSEANLQSKSEEMTLNILSEFKQNGDTSL) the chain is Cytoplasmic.

It belongs to the G-protein coupled receptor 1 family. In terms of tissue distribution, expressed in muscle, heart, liver, kidney, lung, brain, spleen, but not in testis.

The protein resides in the cell membrane. In terms of biological role, receptor for extracellular adenine nucleotides such as ADP. In platelets, binding to ADP leads to mobilization of intracellular calcium ions via activation of phospholipase C, a change in platelet shape, and ultimately platelet aggregation. The polypeptide is P2Y purinoceptor 1 (P2ry1) (Rattus norvegicus (Rat)).